A 1606-amino-acid polypeptide reads, in one-letter code: Fatty acid synthase apf5 (1606 aa).

The Carrier domain occupies 142 to 218 (VPVSAILISL…ETLSTSHDGQ (77 aa)). At Ser-177 the chain carries O-(pantetheine 4'-phosphoryl)serine. The Ketosynthase family 3 (KS3) domain maps to 996–1539 (KESLIEVALQ…QKGGQALLVH (544 aa)). Active-site for beta-ketoacyl synthase activity residues include Cys-1182, His-1424, and His-1465.

Belongs to the thiolase-like superfamily. Fungal fatty acid synthetase subunit alpha family.

The catalysed reaction is a fatty acyl-[ACP] + malonyl-[ACP] + H(+) = a 3-oxoacyl-[ACP] + holo-[ACP] + CO2. It participates in secondary metabolite biosynthesis. Its function is as follows. Fatty acid synthase; part of the gene cluster that mediates the biosynthesis of the cyclic tetrapeptide apicidin F (APF). The non-ribosomal peptide synthetase apf1 incorporates four different amino acids to produce apicidin F: L-phenylalanine, D-pipecolic acid (D-pip), N-methoxy-L-tryptophan and L-2-aminooctanedioic acid. L-Phenylalanine is the only proteinogenic amino acid directly used by apf1. The 3 other apf1 substrates are non-proteinogenic and have to be modified by other enzymes of the cluster. Lysine is converted to delta-1-pyrroline-5-carboxylate (P5C) which is reduced to L-pipecolic acid (L-pip) by apf3. L-pip is epimerized to D-pip, probably by apf1 activity, prior to incorporation. L-Tryptophan is N-oxidyzed by one of the cytochrome P450 monooxygenases (apf7 or apf8), and further methylated at the hydroxy group by the O-methyltransferase apf6 to yield N-methoxy-L-tryptophan. The synthesis of the fourth apf1 substrate is more complex. The fatty acid synthase apf5 is involved in the synthesis of the octanoic acid backbone of L-2-aminooctanedioic acid by fixing one acetyl-CoA unit and three malonyl-CoA units. Then one of the cytochrome P450 monooxygenases (apf7 or apf8) may oxidize this backbone to 2-oxooctanoic acid. The aminotransferase apf4 is predicted to catalyze the exchange of the keto group with an amino group. The next step would be the oxidation of 2-aminooctanoic acid by one of the cytochrome P450 monooxygenases (apf7 or apf8). The last step is the oxidation of 2-amino-8-hydroxyoctanoic acid to 2-aminooctanedioic acid is catalyzed by the FAD-dependent monooxygenase apf9. The protein is Fatty acid synthase apf5 of Gibberella fujikuroi (strain CBS 195.34 / IMI 58289 / NRRL A-6831) (Bakanae and foot rot disease fungus).